Here is a 207-residue protein sequence, read N- to C-terminus: Glycerol-3-phosphate acyltransferase (207 aa).

5 consecutive transmembrane segments (helical) span residues 2–22, 47–67, 72–92, 121–141, and 155–175; these read ILVLCFILAYFIGAIPFGVVI, MLGPVGGSIVLVLDILKGTLA, ILFGIEHHWLVLIVGLAAVFG, FFVIAFAIWFSLILLTSMVSV, and LVYHDWLLTTVACGLLVVFLI.

This sequence belongs to the PlsY family. In terms of assembly, probably interacts with PlsX.

The protein resides in the cell membrane. The catalysed reaction is an acyl phosphate + sn-glycerol 3-phosphate = a 1-acyl-sn-glycero-3-phosphate + phosphate. Its pathway is lipid metabolism; phospholipid metabolism. In terms of biological role, catalyzes the transfer of an acyl group from acyl-phosphate (acyl-PO(4)) to glycerol-3-phosphate (G3P) to form lysophosphatidic acid (LPA). This enzyme utilizes acyl-phosphate as fatty acyl donor, but not acyl-CoA or acyl-ACP. The polypeptide is Glycerol-3-phosphate acyltransferase (Lacticaseibacillus casei (strain BL23) (Lactobacillus casei)).